A 343-amino-acid polypeptide reads, in one-letter code: General transcription and DNA repair factor IIH subunit TFB6 (343 aa).

Position 69 is a phosphotyrosine (Y69). T71 and T84 each carry phosphothreonine. Phosphoserine occurs at positions 104, 105, 108, and 342.

In terms of assembly, component of the general transcription factor TFIIH, composed of a 7-subunit TFIIH core complex composed of XPB/SSL2, XPD/RAD3, SSL1, TFB1, TFB2, TFB4 and TFB5 which is active in NER; the 3-subunit CTD-kinase module TFIIK composed of CCL1, KIN28, and TFB3 which is active in transcription; as well as TFB6 that regulates SSL2 association with the complex. Phosphorylation leads the dissociation of from SSL2.

It localises to the cytoplasm. It is found in the nucleus. Component of the general transcription and DNA repair factor IIH (TFIIH) core complex, which is involved in general and transcription-coupled nucleotide excision repair (NER) of damaged DNA and, when complexed to TFIIK, in RNA transcription by RNA polymerase II. In NER, TFIIH acts by opening DNA around the lesion to allow the excision of the damaged oligonucleotide and its replacement by a new DNA fragment. In transcription, TFIIH has an essential role in transcription initiation. When the pre-initiation complex (PIC) has been established, TFIIH is required for promoter opening and promoter escape. Phosphorylation of the C-terminal tail (CTD) of the largest subunit of RNA polymerase II by the kinase module TFIIK controls the initiation of transcription. TFB6 facilitates dissociation of the SSL2 helicase from TFIIH after transcription initiation. This is General transcription and DNA repair factor IIH subunit TFB6 from Saccharomyces cerevisiae (strain ATCC 204508 / S288c) (Baker's yeast).